The primary structure comprises 219 residues: Guanylate kinase (219 aa).

One can recognise a Guanylate kinase-like domain in the interval 15-194 (GLMFVLSSPS…AFESVKAILR (180 aa)). Position 22-29 (22-29 (SPSGAGKT)) interacts with ATP.

This sequence belongs to the guanylate kinase family.

Its subcellular location is the cytoplasm. The catalysed reaction is GMP + ATP = GDP + ADP. Essential for recycling GMP and indirectly, cGMP. This is Guanylate kinase from Rhodopseudomonas palustris (strain BisB5).